Consider the following 561-residue polypeptide: DNA ligase B (561 aa).

Lys128 serves as the catalytic N6-AMP-lysine intermediate.

This sequence belongs to the NAD-dependent DNA ligase family. LigB subfamily.

The catalysed reaction is NAD(+) + (deoxyribonucleotide)n-3'-hydroxyl + 5'-phospho-(deoxyribonucleotide)m = (deoxyribonucleotide)n+m + AMP + beta-nicotinamide D-nucleotide.. Functionally, catalyzes the formation of phosphodiester linkages between 5'-phosphoryl and 3'-hydroxyl groups in double-stranded DNA using NAD as a coenzyme and as the energy source for the reaction. The protein is DNA ligase B of Pseudomonas syringae pv. tomato (strain ATCC BAA-871 / DC3000).